Reading from the N-terminus, the 151-residue chain is Salivary C-type lectin 2 (151 aa).

Positions methionine 1–cysteine 15 are cleaved as a signal peptide. In terms of domain architecture, C-type lectin spans tyrosine 25–glutamate 147. 2 cysteine pairs are disulfide-bonded: cysteine 41–cysteine 146 and cysteine 118–cysteine 138.

Ca(2+) serves as cofactor. As to expression, expressed in female salivary gland. Not detected or low-level expression in female midgut and fat body.

It localises to the secreted. Salivary protein with carbohydrate-binding activity. Binds to D-mannose, D-galactose, D-glucose and maltose. Agglutinates host erythrocytes. Probably participates in mosquito innate immune responses to prevent microorganism multiplication in sugar and blood meals. Functionally, (Microbial infection) Binds to the surface of and agglutinates Escherichia coli in vitro. Its function is as follows. (Microbial infection) Binds to the surface of and agglutinates Pseudomonas aeruginosa in vitro. In terms of biological role, (Microbial infection) Binds to the surface of and agglutinates Bacillus subtilis in vitro. (Microbial infection) Agglutinates Staphylococcus aureus in vitro. Functionally, (Microbial infection) Agglutinates Candida albicans in vitro. Its function is as follows. (Microbial infection) Does not affect replication of dengue virus type 2 in host cells. The polypeptide is Salivary C-type lectin 2 (Aedes albopictus (Asian tiger mosquito)).